The sequence spans 406 residues: Argininosuccinate synthase (406 aa).

8–16 (AYSGGLDTS) serves as a coordination point for ATP. Tyr86 is a binding site for L-citrulline. Gly116 lines the ATP pocket. Positions 118, 122, and 123 each coordinate L-aspartate. An L-citrulline-binding site is contributed by Asn122. The L-citrulline site is built by Arg126, Ser174, Ser183, Glu259, and Tyr271.

This sequence belongs to the argininosuccinate synthase family. Type 1 subfamily. Homotetramer.

Its subcellular location is the cytoplasm. The enzyme catalyses L-citrulline + L-aspartate + ATP = 2-(N(omega)-L-arginino)succinate + AMP + diphosphate + H(+). The protein operates within amino-acid biosynthesis; L-arginine biosynthesis; L-arginine from L-ornithine and carbamoyl phosphate: step 2/3. The protein is Argininosuccinate synthase of Dehalococcoides mccartyi (strain ATCC BAA-2266 / KCTC 15142 / 195) (Dehalococcoides ethenogenes (strain 195)).